We begin with the raw amino-acid sequence, 122 residues long: Large ribosomal subunit protein uL18 (122 aa).

Belongs to the universal ribosomal protein uL18 family. As to quaternary structure, part of the 50S ribosomal subunit; part of the 5S rRNA/L5/L18/L25 subcomplex. Contacts the 5S and 23S rRNAs.

Functionally, this is one of the proteins that bind and probably mediate the attachment of the 5S RNA into the large ribosomal subunit, where it forms part of the central protuberance. The sequence is that of Large ribosomal subunit protein uL18 from Leptospira borgpetersenii serovar Hardjo-bovis (strain JB197).